Consider the following 131-residue polypeptide: S-adenosylmethionine decarboxylase proenzyme (131 aa).

The Schiff-base intermediate with substrate; via pyruvic acid role is filled by S64. S64 bears the Pyruvic acid (Ser); by autocatalysis mark. H69 acts as the Proton acceptor; for processing activity in catalysis. The Proton donor; for catalytic activity role is filled by C84.

The protein belongs to the prokaryotic AdoMetDC family. Type 1 subfamily. Heterotetramer of two alpha and two beta chains arranged as a dimer of alpha/beta heterodimers. Pyruvate serves as cofactor. Post-translationally, is synthesized initially as an inactive proenzyme. Formation of the active enzyme involves a self-maturation process in which the active site pyruvoyl group is generated from an internal serine residue via an autocatalytic post-translational modification. Two non-identical subunits are generated from the proenzyme in this reaction, and the pyruvate is formed at the N-terminus of the alpha chain, which is derived from the carboxyl end of the proenzyme. The post-translation cleavage follows an unusual pathway, termed non-hydrolytic serinolysis, in which the side chain hydroxyl group of the serine supplies its oxygen atom to form the C-terminus of the beta chain, while the remainder of the serine residue undergoes an oxidative deamination to produce ammonia and the pyruvoyl group blocking the N-terminus of the alpha chain.

It carries out the reaction S-adenosyl-L-methionine + H(+) = S-adenosyl 3-(methylsulfanyl)propylamine + CO2. The protein operates within amine and polyamine biosynthesis; S-adenosylmethioninamine biosynthesis; S-adenosylmethioninamine from S-adenosyl-L-methionine: step 1/1. Catalyzes the decarboxylation of S-adenosylmethionine to S-adenosylmethioninamine (dcAdoMet), the propylamine donor required for the synthesis of the polyamines spermine and spermidine from the diamine putrescine. In Thermoplasma acidophilum (strain ATCC 25905 / DSM 1728 / JCM 9062 / NBRC 15155 / AMRC-C165), this protein is S-adenosylmethionine decarboxylase proenzyme.